A 212-amino-acid chain; its full sequence is Mediator of RNA polymerase II transcription subunit 20 (212 aa).

It belongs to the Mediator complex subunit 20 family. Interacts with PPARG. Component of the Mediator complex, which is composed of MED1, MED4, MED6, MED7, MED8, MED9, MED10, MED11, MED12, MED13, MED13L, MED14, MED15, MED16, MED17, MED18, MED19, MED20, MED21, MED22, MED23, MED24, MED25, MED26, MED27, MED29, MED30, MED31, CCNC, CDK8 and CDC2L6/CDK11. The MED12, MED13, CCNC and CDK8 subunits form a distinct module termed the CDK8 module. Mediator containing the CDK8 module is less active than Mediator lacking this module in supporting transcriptional activation. Individual preparations of the Mediator complex lacking one or more distinct subunits have been variously termed ARC, CRSP, DRIP, PC2, SMCC and TRAP.

The protein resides in the nucleus. Component of the Mediator complex, a coactivator involved in the regulated transcription of nearly all RNA polymerase II-dependent genes. Mediator functions as a bridge to convey information from gene-specific regulatory proteins to the basal RNA polymerase II transcription machinery. Mediator is recruited to promoters by direct interactions with regulatory proteins and serves as a scaffold for the assembly of a functional preinitiation complex with RNA polymerase II and the general transcription factors. The sequence is that of Mediator of RNA polymerase II transcription subunit 20 (MED20) from Homo sapiens (Human).